Consider the following 227-residue polypeptide: Ribonuclease 3 (227 aa).

Residues 5–127 enclose the RNase III domain; it reads YQKLSRRIGY…IIGAMYLDAG (123 aa). E40 lines the Mg(2+) pocket. D44 is an active-site residue. Mg(2+) is bound by residues D113 and E116. E116 is a catalytic residue. The DRBM domain occupies 154–224; sequence DAKTRLQEFL…AAKALKKLEK (71 aa).

This sequence belongs to the ribonuclease III family. In terms of assembly, homodimer. Requires Mg(2+) as cofactor.

It is found in the cytoplasm. It carries out the reaction Endonucleolytic cleavage to 5'-phosphomonoester.. Functionally, digests double-stranded RNA. Involved in the processing of primary rRNA transcript to yield the immediate precursors to the large and small rRNAs (23S and 16S). Processes some mRNAs, and tRNAs when they are encoded in the rRNA operon. Processes pre-crRNA and tracrRNA of type II CRISPR loci if present in the organism. This Marinomonas sp. (strain MWYL1) protein is Ribonuclease 3.